The following is a 936-amino-acid chain: Calcium homeostasis endoplasmic reticulum protein (936 aa).

Residue Met1 is modified to N-acetylmethionine. The stretch at 15–57 (VIDKLAQFVARNGPEFEKMTMEKQKDNPKFSFLFGGEFYSYYK) is one SURP motif repeat. Lys18 carries the post-translational modification N6-acetyllysine. A disordered region spans residues 77-102 (EPTSAMPPLPQPPLAPTASLTPAQGT). The span at 81-91 (AMPPLPQPPLA) shows a compositional bias: pro residues. One can recognise a CID domain in the interval 149–289 (ETQLDMSEFD…QLQSPALGLG (141 aa)). A disordered region spans residues 328 to 646 (LAQQQQQQQQ…RQGPPHINHD (319 aa)). Residues 330–355 (QQQQQQQQQQQQQPQPQPQPQIQLPQ) show a composition bias toward low complexity. Residues 363–383 (TPPPPAPPPASAPAPTIPPTT) are compositionally biased toward pro residues. A compositionally biased stretch (polar residues) spans 395–405 (PGSSEYDTSAG). A compositionally biased stretch (low complexity) spans 488–500 (PWNNQPDPNWNNQ). The segment covering 534 to 550 (PFPPHQQHPQFNQPPHP) has biased composition (pro residues). The span at 551–560 (HNFNRFPPRF) shows a compositional bias: low complexity. Residues 561 to 572 (MQDDFPPRHPFE) are compositionally biased toward basic and acidic residues. Over residues 594–603 (PHHHPGHRMP) the composition is skewed to basic residues. The residue at position 723 (Tyr723) is a Phosphotyrosine. Residues 731–887 (RARRRKGQEK…DPIKGGDVRD (157 aa)) form a disordered region. Positions 748–758 (SRSRSKSRGRS) are enriched in basic residues. Over residues 759–773 (SSRSSSRSSKSSRSS) the composition is skewed to low complexity. The span at 774–824 (SRSHSRSRSRSSSRSRSRSRSRSRSSRSRSRSRSRSRSKSYSPGRRRRSRS) shows a compositional bias: basic residues. Ser822, Ser824, and Ser826 each carry phosphoserine. Thr828 carries the post-translational modification Phosphothreonine. Ser837 carries the phosphoserine modification. One can recognise a G-patch domain in the interval 850–900 (EENKGHQMLVKMGWSGSGGLGAKEQGIQDPIKGGDVRDKWDQYKGVGVALD). A Glycyl lysine isopeptide (Lys-Gly) (interchain with G-Cter in SUMO2) cross-link involves residue Lys853. Phosphoserine occurs at positions 864 and 866. A Glycyl lysine isopeptide (Lys-Gly) (interchain with G-Cter in SUMO2) cross-link involves residue Lys881. Residue Lys888 is modified to N6-acetyllysine. Phosphoserine is present on Ser913.

It is found in the cytoplasm. The protein localises to the perinuclear region. Its subcellular location is the endoplasmic reticulum. In terms of biological role, involved in calcium homeostasis, growth and proliferation. The polypeptide is Calcium homeostasis endoplasmic reticulum protein (Mus musculus (Mouse)).